A 22-amino-acid polypeptide reads, in one-letter code: Zinc finger protein 326 (22 aa).

Residues 1–22 are disordered; it reads QGYGFNEPEQTRNQGGSSWEAP. The segment covering 11–22 has biased composition (polar residues); it reads TRNQGGSSWEAP.

It belongs to the AKAP95 family.

Its subcellular location is the nucleus matrix. Its function is as follows. Probable transcriptional activator which may play a role in neuronal differentiation. Able to bind DNA and activate expression in vitro. The sequence is that of Zinc finger protein 326 (Znf326) from Rattus norvegicus (Rat).